Here is a 457-residue protein sequence, read N- to C-terminus: MGKEDGFRTQKRVSTASSAAAGVLPTTMASGGVRRPPPRGRQIQKTFNNVKMTILCGFVTILVLRGTIGINFGTSDADVVNQNIIEETNRLLAEIRSDSDPTDSNEPPDSDLDLNMTYTLGPKITNWDQKRKLWLTQNPDFPSFINGKAKVLLLTGSPPKPCDNPIGDHYLLKSVKNKIDYCRIHGIEIVYNMAHLDKELAGYWAKLPMIRRLMLSHPEIEWIWWMDSDALFTDMVFEIPLSRYENHNLVIHGYPDLLFDQKSWIALNTGSFLFRNCQWSLDLLDAWAPMGPKGPIREEAGKILTANLKGRPAFEADDQSALIYLLLSQKETWMEKVFVENQYYLHGFWEGLVDKYEEMMEKYHPGLGDERWPFITHFVGCKPCGSYADYAVERCLKSMERAFNFADNQVLKLYGFGHRGLLSPKIKRIRNETTFPLKFVDRFDIRRTTPLKIEARS.

The disordered stretch occupies residues 1 to 40 (MGKEDGFRTQKRVSTASSAAAGVLPTTMASGGVRRPPPRG). The Cytoplasmic segment spans residues 1–51 (MGKEDGFRTQKRVSTASSAAAGVLPTTMASGGVRRPPPRGRQIQKTFNNVK). The helical; Signal-anchor for type II membrane protein transmembrane segment at 52 to 71 (MTILCGFVTILVLRGTIGIN) threads the bilayer. Residues 72–457 (FGTSDADVVN…TTPLKIEARS (386 aa)) are Lumenal-facing. 2 N-linked (GlcNAc...) asparagine glycosylation sites follow: Asn115 and Asn431.

It belongs to the glycosyltransferase 34 family.

Its subcellular location is the golgi apparatus membrane. The enzyme catalyses Transfers an alpha-D-xylosyl residue from UDP-D-xylose to a glucose residue in xyloglucan, forming an alpha-(1-&gt;6)-D-xylosyl-D-glucose linkage.. Its function is as follows. Probable xyloglucan xylosyltransferase involved in the biosynthesis of xyloglucan. The polypeptide is Probable xyloglucan 6-xylosyltransferase 3 (Arabidopsis thaliana (Mouse-ear cress)).